A 358-amino-acid chain; its full sequence is Methionine aminopeptidase 2 (358 aa).

Residue histidine 111 coordinates substrate. The a divalent metal cation site is built by aspartate 131, aspartate 142, and histidine 211. Histidine 219 is a binding site for substrate. Residues glutamate 244 and glutamate 339 each coordinate a divalent metal cation.

This sequence belongs to the peptidase M24A family. Methionine aminopeptidase eukaryotic type 2 subfamily. Co(2+) serves as cofactor. Zn(2+) is required as a cofactor. It depends on Mn(2+) as a cofactor. The cofactor is Fe(2+).

The protein resides in the cytoplasm. The catalysed reaction is Release of N-terminal amino acids, preferentially methionine, from peptides and arylamides.. Functionally, cotranslationally removes the N-terminal methionine from nascent proteins. The N-terminal methionine is often cleaved when the second residue in the primary sequence is small and uncharged (Met-Ala-, Cys, Gly, Pro, Ser, Thr, or Val). The polypeptide is Methionine aminopeptidase 2 (Laccaria bicolor (strain S238N-H82 / ATCC MYA-4686) (Bicoloured deceiver)).